The chain runs to 187 residues: Bifunctional protein PyrR (187 aa).

The short motif at 109–121 (VILVDDVLYSGRS) is the PRPP-binding element.

It belongs to the purine/pyrimidine phosphoribosyltransferase family. PyrR subfamily.

It catalyses the reaction UMP + diphosphate = 5-phospho-alpha-D-ribose 1-diphosphate + uracil. Regulates the transcription of the pyrimidine nucleotide (pyr) operon in response to exogenous pyrimidines. Its function is as follows. Also displays a weak uracil phosphoribosyltransferase activity which is not physiologically significant. This Mycobacterium ulcerans (strain Agy99) protein is Bifunctional protein PyrR.